The following is a 485-amino-acid chain: N-succinylglutamate 5-semialdehyde dehydrogenase (485 aa).

220–225 provides a ligand contact to NAD(+); sequence GSANTG. Residues Glu-243 and Cys-278 contribute to the active site.

Belongs to the aldehyde dehydrogenase family. AstD subfamily.

It carries out the reaction N-succinyl-L-glutamate 5-semialdehyde + NAD(+) + H2O = N-succinyl-L-glutamate + NADH + 2 H(+). The protein operates within amino-acid degradation; L-arginine degradation via AST pathway; L-glutamate and succinate from L-arginine: step 4/5. Its function is as follows. Catalyzes the NAD-dependent reduction of succinylglutamate semialdehyde into succinylglutamate. In Aliivibrio fischeri (strain ATCC 700601 / ES114) (Vibrio fischeri), this protein is N-succinylglutamate 5-semialdehyde dehydrogenase.